The following is a 350-amino-acid chain: UDP-3-O-acylglucosamine N-acyltransferase (350 aa).

The Proton acceptor role is filled by His-244.

Belongs to the transferase hexapeptide repeat family. LpxD subfamily. Homotrimer.

It catalyses the reaction a UDP-3-O-[(3R)-3-hydroxyacyl]-alpha-D-glucosamine + a (3R)-hydroxyacyl-[ACP] = a UDP-2-N,3-O-bis[(3R)-3-hydroxyacyl]-alpha-D-glucosamine + holo-[ACP] + H(+). It functions in the pathway bacterial outer membrane biogenesis; LPS lipid A biosynthesis. Functionally, catalyzes the N-acylation of UDP-3-O-acylglucosamine using 3-hydroxyacyl-ACP as the acyl donor. Is involved in the biosynthesis of lipid A, a phosphorylated glycolipid that anchors the lipopolysaccharide to the outer membrane of the cell. This Herminiimonas arsenicoxydans protein is UDP-3-O-acylglucosamine N-acyltransferase.